The primary structure comprises 172 residues: MRSSLSFVGFMGSGKTSIGKRISLFFNIPFLDLDEYIEKKLKKSISDIFIEKGEEYFRNIETESLREAFSLYPKIVLSTGGGVVLREENRRILREKSKVIYLKGEFENLMKHLENKEEHEKRPLLKKGREELYNLWKKRLPLYESCADIIVEVDNKDIDEITFEIIERLRDD.

12–17 provides a ligand contact to ATP; it reads GSGKTS. Mg(2+) is bound at residue threonine 16. 3 residues coordinate substrate: aspartate 34, arginine 58, and glycine 81. Arginine 122 serves as a coordination point for ATP. Arginine 139 is a substrate binding site.

This sequence belongs to the shikimate kinase family. As to quaternary structure, monomer. Mg(2+) serves as cofactor.

It is found in the cytoplasm. The catalysed reaction is shikimate + ATP = 3-phosphoshikimate + ADP + H(+). It participates in metabolic intermediate biosynthesis; chorismate biosynthesis; chorismate from D-erythrose 4-phosphate and phosphoenolpyruvate: step 5/7. Catalyzes the specific phosphorylation of the 3-hydroxyl group of shikimic acid using ATP as a cosubstrate. This Dictyoglomus turgidum (strain DSM 6724 / Z-1310) protein is Shikimate kinase.